We begin with the raw amino-acid sequence, 647 residues long: XK-related protein 4 (647 aa).

A compositionally biased stretch (basic and acidic residues) spans 1–15; it reads MAAKSDGRLKMKKSS. The segment at 1-44 is disordered; it reads MAAKSDGRLKMKKSSDVAFTPLQNSDNSGSVQGLAPGLPSGSGA. Residues 21 to 31 are compositionally biased toward polar residues; that stretch reads PLQNSDNSGSV. 2 consecutive transmembrane segments (helical) span residues 112-132 and 142-162; these read WILA…WLAV and WFGL…VFSF. Serine 197 bears the Phosphoserine mark. Residues 197 to 238 form a disordered region; the sequence is SAAGEGEVRPSTPQRQASNASKSNIAATNSGSNSNGATRTSG. Residues 207 to 236 are compositionally biased toward polar residues; sequence STPQRQASNASKSNIAATNSGSNSNGATRT. 8 helical membrane passes run 245 to 265, 303 to 323, 328 to 348, 362 to 382, 393 to 415, 425 to 445, 454 to 474, and 484 to 504; these read CSFC…GQIW, HLLA…CIIV, LQAL…WALA, KPIS…TIAA, VFQL…WIVH, WEEI…WFNV, LFIY…LWYL, and FAIP…VFML.

The protein belongs to the XK family. Homodimer; homodimerization takes place upon caspase cleavage. Interacts with the processed C-terminus of XRCC4 (protein XRCC4, C-terminus); interaction promotes the phospholipid scramblase activity. In terms of processing, undergoes proteolytic processing by caspase-3 (CASP3), caspase-6 (CASP6) and caspase-7 (CASP7) to generate the XK-related protein 4, processed form, leading to its activation. Highly expressed in expressed in the brain; weakly expressed in the spleen, thymus, uterus, blood vessels and fetus.

It is found in the cell membrane. It catalyses the reaction a 1,2-diacyl-sn-glycero-3-phospho-L-serine(in) = a 1,2-diacyl-sn-glycero-3-phospho-L-serine(out). Its activity is regulated as follows. Phospholipid scramblase activity is activated upon caspase cleavage to generate the XK-related protein 4, processed form. Does not act prior the onset of apoptosis. With respect to regulation, homodimerizes upon caspase cleavage. Phospholipid scramblase activity is activated following interaction with the processed C-terminus of XRCC4 (protein XRCC4, C-terminus). Functionally, phospholipid scramblase that promotes phosphatidylserine exposure on apoptotic cell surface. Phosphatidylserine is a specific marker only present at the surface of apoptotic cells and acts as a specific signal for engulfment. The chain is XK-related protein 4 from Mus musculus (Mouse).